The primary structure comprises 587 residues: Formate--tetrahydrofolate ligase (587 aa).

Position 73–80 (Thr-73–Ser-80) interacts with ATP.

The protein belongs to the formate--tetrahydrofolate ligase family.

The catalysed reaction is (6S)-5,6,7,8-tetrahydrofolate + formate + ATP = (6R)-10-formyltetrahydrofolate + ADP + phosphate. It participates in one-carbon metabolism; tetrahydrofolate interconversion. This is Formate--tetrahydrofolate ligase from Desulfosudis oleivorans (strain DSM 6200 / JCM 39069 / Hxd3) (Desulfococcus oleovorans).